The following is a 144-amino-acid chain: uncharacterized protein (144 aa).

Residues 1–16 form the signal peptide; it reads MRKFLIVLLLPLLVLA.

This is an uncharacterized protein from Aquifex aeolicus (strain VF5).